Here is a 504-residue protein sequence, read N- to C-terminus: Alpha-L-arabinofuranosidase C (504 aa).

N-linked (GlcNAc...) asparagine glycosylation is found at asparagine 81, asparagine 152, asparagine 269, and asparagine 329.

This sequence belongs to the glycosyl hydrolase 51 family.

It is found in the secreted. The enzyme catalyses Hydrolysis of terminal non-reducing alpha-L-arabinofuranoside residues in alpha-L-arabinosides.. It functions in the pathway glycan metabolism; L-arabinan degradation. Functionally, alpha-L-arabinofuranosidase involved in the degradation of arabinoxylan, a major component of plant hemicellulose. Acts only on small linear 1,5-alpha-linked L-arabinofuranosyl oligosaccharides. The chain is Alpha-L-arabinofuranosidase C (abfC) from Emericella nidulans (strain FGSC A4 / ATCC 38163 / CBS 112.46 / NRRL 194 / M139) (Aspergillus nidulans).